Here is a 342-residue protein sequence, read N- to C-terminus: Glutamyl endopeptidase (342 aa).

Positions Met1–Ala29 are cleaved as a signal peptide. Residues Leu30–Asn68 constitute a propeptide that is removed on maturation. The tract at residues Lys33–Gln63 is disordered. Residues Pro39–Pro50 are compositionally biased toward low complexity. Residues His119, Asp161, and Ser237 each act as charge relay system in the active site. Residues Phe283–Ala342 form a disordered region. Residues Asp286 to Ala342 show a composition bias toward low complexity. A run of 13 repeats spans residues Pro289–Asn291, Pro292–Asn294, Pro295–Asn297, Pro298–Asn300, Pro301–Asn303, Pro304–Asn306, Pro307–Asn309, Pro310–Asn312, Pro316–Asn318, Pro319–Asn321, Pro322–Asn324, Pro325–Asn327, and Pro328–Asn330. The 13 X 3 AA repeats of P-[DN]-N stretch occupies residues Pro289–Asn330.

It belongs to the peptidase S1B family. Proteolytically cleaved by aureolysin (aur). This cleavage leads to the activation of SspA.

Its subcellular location is the secreted. The enzyme catalyses Preferential cleavage: Glu-|-Xaa, Asp-|-Xaa.. In terms of biological role, preferentially cleaves peptide bonds on the carboxyl-terminal side of aspartate and glutamate. Along with other extracellular proteases it is involved in colonization and infection of human tissues. Required for proteolytic maturation of thiol protease SspB and inactivation of SspC, an inhibitor of SspB. It is the most important protease for degradation of fibronectin-binding protein (FnBP) and surface protein A, which are involved in adherence to host cells. May also protect bacteria against host defense mechanism by cleaving the immunoglobulin classes IgG, IgA and IgM. May be involved in the stability of secreted lipases. The sequence is that of Glutamyl endopeptidase (sspA) from Staphylococcus aureus (strain Mu50 / ATCC 700699).